A 559-amino-acid polypeptide reads, in one-letter code: Formate--tetrahydrofolate ligase (559 aa).

Residue 68–75 (TPAGEGKT) coordinates ATP.

The protein belongs to the formate--tetrahydrofolate ligase family.

The catalysed reaction is (6S)-5,6,7,8-tetrahydrofolate + formate + ATP = (6R)-10-formyltetrahydrofolate + ADP + phosphate. It participates in one-carbon metabolism; tetrahydrofolate interconversion. The chain is Formate--tetrahydrofolate ligase from Rhizobium meliloti (strain 1021) (Ensifer meliloti).